The sequence spans 74 residues: Peptide Im-4 (74 aa).

The N-terminal stretch at 1–22 is a signal peptide; that stretch reads MKFQYLLAIFMIVLVVTDHCQA. Lys39 is subject to Lysine amide; partial. Residues 40-74 constitute a propeptide that is removed on maturation; it reads GRRRRQLEARYEPQQRNFRKREIDFEKLFANMPDY.

The protein belongs to the non-disulfide-bridged peptide (NDBP) superfamily. Short antimicrobial peptide (group 4) family. Expressed by the venom gland.

The protein localises to the secreted. It is found in the target cell membrane. In terms of biological role, antimicrobial peptide that probably forms pores in target membranes. Has antibacterial activity against Gram-positive bacteria S.aureus NBRC 13276 (MIC=5-10 uM) and B.subtilis NBRC 3009 (MIC=2.5-5 uM) but not against Gram-negative bacterium E.coli NBRC 3972. This is Peptide Im-4 from Isometrus maculatus (Lesser brown scorpion).